Reading from the N-terminus, the 171-residue chain is Cardioactive peptide (171 aa).

The first 26 residues, 1–26, serve as a signal peptide directing secretion; that stretch reads MQMYHVVLGCSLAILLVILDIPQASC. Residues 27–49 constitute a propeptide that is removed on maturation; sequence DDVVIQKRQVDPAEMDRLLDPKR. A disulfide bridge links C54 with C60. C60 bears the Cysteine amide mark. A propeptide spanning residues 64–171 is cleaved from the precursor; sequence RSDESMGTLV…QEEITKPWSR (108 aa). The tract at residues 116–171 is disordered; the sequence is QSNQFGAGMDRPLPLPIAGYRRKRFADPESQAPAPHSNLPRATSQLQEEITKPWSR.

As to expression, central nervous system; most neurons exhibit coexpression with burs.

It is found in the secreted. Cardioregulatory neurohormone that increases heart beat rate during adult wing inflation; has no effect on beat amplitude. The effect of CCAP is both ino- and chronotropic. The sequence is that of Cardioactive peptide from Periplaneta americana (American cockroach).